We begin with the raw amino-acid sequence, 254 residues long: 3-deoxy-manno-octulosonate cytidylyltransferase (254 aa).

The protein belongs to the KdsB family.

It localises to the cytoplasm. It carries out the reaction 3-deoxy-alpha-D-manno-oct-2-ulosonate + CTP = CMP-3-deoxy-beta-D-manno-octulosonate + diphosphate. Its pathway is nucleotide-sugar biosynthesis; CMP-3-deoxy-D-manno-octulosonate biosynthesis; CMP-3-deoxy-D-manno-octulosonate from 3-deoxy-D-manno-octulosonate and CTP: step 1/1. It functions in the pathway bacterial outer membrane biogenesis; lipopolysaccharide biosynthesis. In terms of biological role, activates KDO (a required 8-carbon sugar) for incorporation into bacterial lipopolysaccharide in Gram-negative bacteria. This chain is 3-deoxy-manno-octulosonate cytidylyltransferase, found in Pseudomonas aeruginosa (strain LESB58).